The primary structure comprises 356 residues: NADH-quinone oxidoreductase subunit H (356 aa).

8 helical membrane-spanning segments follow: residues 4 to 24 (ALIL…LTGV), 79 to 99 (LLAP…IPFG), 127 to 147 (GVLY…IAGW), 166 to 186 (ISYE…TGSL), 198 to 218 (MWNI…TAMF), 251 to 271 (FFLA…LLFF), 289 to 309 (FIGL…FIWV), and 329 to 349 (MIPW…YWKE).

The protein belongs to the complex I subunit 1 family. In terms of assembly, NDH-1 is composed of 14 different subunits. Subunits NuoA, H, J, K, L, M, N constitute the membrane sector of the complex.

Its subcellular location is the cell inner membrane. It catalyses the reaction a quinone + NADH + 5 H(+)(in) = a quinol + NAD(+) + 4 H(+)(out). Functionally, NDH-1 shuttles electrons from NADH, via FMN and iron-sulfur (Fe-S) centers, to quinones in the respiratory chain. The immediate electron acceptor for the enzyme in this species is believed to be ubiquinone. Couples the redox reaction to proton translocation (for every two electrons transferred, four hydrogen ions are translocated across the cytoplasmic membrane), and thus conserves the redox energy in a proton gradient. This subunit may bind ubiquinone. The polypeptide is NADH-quinone oxidoreductase subunit H (Leptospira biflexa serovar Patoc (strain Patoc 1 / ATCC 23582 / Paris)).